The sequence spans 905 residues: Protein translocase subunit SecA (905 aa).

Residues Q89, 107–111 (GEGKT), and D502 contribute to the ATP site. Residues C889, C891, C900, and H901 each contribute to the Zn(2+) site.

Belongs to the SecA family. In terms of assembly, monomer and homodimer. Part of the essential Sec protein translocation apparatus which comprises SecA, SecYEG and auxiliary proteins SecDF-YajC and YidC. Requires Zn(2+) as cofactor.

The protein localises to the cell inner membrane. It localises to the cytoplasm. The enzyme catalyses ATP + H2O + cellular proteinSide 1 = ADP + phosphate + cellular proteinSide 2.. In terms of biological role, part of the Sec protein translocase complex. Interacts with the SecYEG preprotein conducting channel. Has a central role in coupling the hydrolysis of ATP to the transfer of proteins into and across the cell membrane, serving both as a receptor for the preprotein-SecB complex and as an ATP-driven molecular motor driving the stepwise translocation of polypeptide chains across the membrane. This Bartonella tribocorum (strain CIP 105476 / IBS 506) protein is Protein translocase subunit SecA.